The primary structure comprises 224 residues: Cytochrome c oxidase subunit 2 (224 aa).

Topologically, residues 1-26 are mitochondrial intermembrane; that stretch reads MSTWGQMNLMDPASPIQIEMMLFHDH. A helical transmembrane segment spans residues 27–48; the sequence is AMAILIGIFTLVSCLGVKLCFN. Residues 49–62 lie on the Mitochondrial matrix side of the membrane; it reads TLSTRTMHEAQLLE. The helical transmembrane segment at 63 to 82 threads the bilayer; sequence TLWTILPAFLLVWLALPSLR. Residues 83-224 lie on the Mitochondrial intermembrane side of the membrane; sequence LLYLLDEQSS…DVKDFINMCN (142 aa). Cu cation contacts are provided by His-161, Cys-196, Glu-198, Cys-200, His-204, and Met-207. Glu-198 serves as a coordination point for Mg(2+).

Belongs to the cytochrome c oxidase subunit 2 family. As to quaternary structure, component of the cytochrome c oxidase (complex IV, CIV), a multisubunit enzyme composed of a catalytic core of 3 subunits and several supernumerary subunits. The complex exists as a monomer or a dimer and forms supercomplexes (SCs) in the inner mitochondrial membrane with ubiquinol-cytochrome c oxidoreductase (cytochrome b-c1 complex, complex III, CIII). It depends on Cu cation as a cofactor.

Its subcellular location is the mitochondrion inner membrane. The catalysed reaction is 4 Fe(II)-[cytochrome c] + O2 + 8 H(+)(in) = 4 Fe(III)-[cytochrome c] + 2 H2O + 4 H(+)(out). Its function is as follows. Component of the cytochrome c oxidase, the last enzyme in the mitochondrial electron transport chain which drives oxidative phosphorylation. The respiratory chain contains 3 multisubunit complexes succinate dehydrogenase (complex II, CII), ubiquinol-cytochrome c oxidoreductase (cytochrome b-c1 complex, complex III, CIII) and cytochrome c oxidase (complex IV, CIV), that cooperate to transfer electrons derived from NADH and succinate to molecular oxygen, creating an electrochemical gradient over the inner membrane that drives transmembrane transport and the ATP synthase. Cytochrome c oxidase is the component of the respiratory chain that catalyzes the reduction of oxygen to water. Electrons originating from reduced cytochrome c in the intermembrane space (IMS) are transferred via the dinuclear copper A center (CU(A)) of subunit 2 and heme A of subunit 1 to the active site in subunit 1, a binuclear center (BNC) formed by heme A3 and copper B (CU(B)). The BNC reduces molecular oxygen to 2 water molecules using 4 electrons from cytochrome c in the IMS and 4 protons from the mitochondrial matrix. In Albinaria turrita (Door snail), this protein is Cytochrome c oxidase subunit 2 (COII).